The sequence spans 656 residues: Chaperone protein HtpG (656 aa).

The interval M1–R359 is a; substrate-binding. Residues E360 to R575 form a b region. Residues I576–M656 are c.

It belongs to the heat shock protein 90 family. As to quaternary structure, homodimer.

The protein resides in the cytoplasm. Molecular chaperone. Has ATPase activity. The protein is Chaperone protein HtpG of Mycobacterium leprae (strain TN).